A 661-amino-acid polypeptide reads, in one-letter code: MNPYGPSRVPEGEVYRPDRLNRKATLVAIVGAAILAFAFALVLWMGLKQTNLPAFGPSNVTRAVASATIAAVLIVTGFLTWLWLRDEHQSNPRWELEDVKPRPKWRTALTYLASYLSPAALVVAVLAIPLSATRLYLDGISVDQGFRTQFLTRMADDIGLSDMNYIDMPTFYPAGWFWLGGRLANLLGLPGWEAFQPWAIVSMAVAASVLVPVWQRITGSLPVATGIALVTTCIILAMNSEEPYAAIVAMGIPAMLVLASRIAKGDKFALAGGIIYLGVSATFYTLFTGAIALSAVAVCIVVAAIVQRSIKPLLWLAVLGGGSIVIALISWGPYLLASINGAERSGDSATHYLPLEGTQFPVPFLASSVVGLLCLVGLIYLVVRFHNNEVRAMWVGIAVFYAWMGMSMAITLLGNTLLGFRLDTVLVLIFATAGVLGIADFRLASVYQLYPTQITERTATHLTNLIVVLVLLGGLYYAQDLPQKNARAIDLAYTDTDGYGERADLYPAGAARYYKDINDHLLDQGFEPSETVVLTDELDFMSYYPYRGYQAFTSHYANPLGEFGNRNAFIEDLAIRSWDELADPQQFSDALNTSPWTIPEVFIFRGSIDDPDAGWKYDVAEDLYPNNPNVRFRGVYFNPESFDQMWQTKQVGPFVVVTHNE.

The next 13 membrane-spanning stretches (helical) occupy residues Leu-26–Gly-46, Val-64–Leu-84, Ala-108–Ile-128, Ala-194–Trp-214, Ile-217–Ala-237, Pro-243–Ala-263, Gly-265–Thr-285, Leu-286–Val-306, Pro-312–Gly-332, Val-362–Val-382, Met-393–Leu-413, Leu-418–Ile-438, and Thr-458–Ala-478.

It belongs to the glycosyltransferase 85 family.

The protein localises to the cell membrane. It carries out the reaction Adds an alpha-D-arabinofuranosyl group from trans,octacis-decaprenylphospho-beta-D-arabinofuranose at the 5-O-position of the eighth, tenth and twelfth galactofuranose unit of the galactofuranan chain of [beta-D-galactofuranosyl-(1-&gt;5)-beta-D-galactofuranosyl-(1-&gt;6)]14-beta-D-galactofuranosyl-(1-&gt;5)-beta-D-galactofuranosyl-(1-&gt;4)-alpha-L-rhamnopyranosyl-(1-&gt;3)-N-acetyl-alpha-D-glucosaminyl-diphospho-trans,octacis-decaprenol.. The protein operates within cell wall biogenesis; cell wall polysaccharide biosynthesis. Its function is as follows. Involved in the biosynthesis of the arabinogalactan (AG) region of the mycolylarabinogalactan-peptidoglycan (mAGP) complex, an essential component of the cell wall. Catalyzes the addition of the first key arabinofuranosyl (Araf) residue from the sugar donor decaprenyl-phospho-arabinose (DPA) on the C-5 of a 6-linked galactofuranosyl (Galf) of the galactan domain, thus 'priming' the galactan for further elaboration by other arabinofuranosyltransferases. The polypeptide is Galactan 5-O-arabinofuranosyltransferase (Corynebacterium glutamicum (strain ATCC 13032 / DSM 20300 / JCM 1318 / BCRC 11384 / CCUG 27702 / LMG 3730 / NBRC 12168 / NCIMB 10025 / NRRL B-2784 / 534)).